Here is a 596-residue protein sequence, read N- to C-terminus: Phosphoprotein (596 aa).

3 stretches are compositionally biased toward polar residues: residues 1–11 (MENNAKDNQIM), 38–66 (TDSQ…QLES), and 74–85 (ENSGSVNENRQL). Disordered stretches follow at residues 1–25 (MENN…SSDI), 38–196 (TDSQ…ESIS), and 220–352 (KNTR…EEST). Residues 33 to 41 (EFILSTDSQ) form an N0 binding region. The segment covering 88 to 97 (SHERATETKN) has biased composition (basic and acidic residues). The span at 127–144 (ISRSSPDPNNGTQIQESI) shows a compositional bias: polar residues. 2 stretches are compositionally biased toward basic and acidic residues: residues 151–168 (EMDK…KDVP) and 233–249 (EDDK…EDTN). Residues 270–324 (TLKISTTTGESTRPQSGSQGKRITSWNILNSESGSRTESTSQNSQIPTSGKSNTV) show a composition bias toward polar residues. Residues 331–352 (LESRIKTQKTDGKEREDTEEST) are compositionally biased toward basic and acidic residues. Residues 374-441 (LDLYQDKRVV…KMDESHRRLI (68 aa)) form a multimerization region. A coiled-coil region spans residues 416-436 (LNQIQNEILSLKTDLKKMDES). Residues 442-475 (ENQKEQLSLITSLISNLKIMTERGGKKDQPENSG) are l protein binding.

Belongs to the respirovirus P protein family. Homotetramer. Interacts (via multimerization domain) with polymerase L; this interaction forms the polymerase complex. Interacts (via N-terminus) with N0; this interaction allows P to chaperon N0 before encapsidation and form the N-P complex. Interacts (via C-terminus) with N-RNA template; this interaction positions the polymerase on the template.

In terms of biological role, essential cofactor of the RNA polymerase L that plays a central role in the transcription and replication by forming the polymerase complex with RNA polymerase L and recruiting L to the genomic N-RNA template for RNA synthesis. Also plays a central role in the encapsidation of nascent RNA chains by forming the encapsidation complex with the nucleocapsid protein N (N-P complex). Acts as a chaperone for newly synthesized free N protein, so-called N0, allowing encapsidation of nascent RNA chains during replication. The nucleoprotein protein N prevents excessive phosphorylation of P, which leads to down-regulation of viral transcription/ replication. Participates, together with N, in the formation of viral factories (viroplasms), which are large inclusions in the host cytoplasm where replication takes place. Recruits host PI4KB and remodel the host endoplasmic reticulum membrane to form viral replication factories. This Bovine parainfluenza 3 virus (BPIV-3) protein is Phosphoprotein (P/V/D).